A 90-amino-acid polypeptide reads, in one-letter code: Sakacin-A immunity factor (90 aa).

In terms of biological role, imparts immunity to sakacin-A to naturally sensitive host strains. The sequence is that of Sakacin-A immunity factor (saiA) from Latilactobacillus sakei (Lactobacillus sakei).